The sequence spans 309 residues: ATP synthase gamma chain (309 aa).

The protein belongs to the ATPase gamma chain family. As to quaternary structure, F-type ATPases have 2 components, CF(1) - the catalytic core - and CF(0) - the membrane proton channel. CF(1) has five subunits: alpha(3), beta(3), gamma(1), delta(1), epsilon(1). CF(0) has three main subunits: a, b and c.

Its subcellular location is the cell membrane. Functionally, produces ATP from ADP in the presence of a proton gradient across the membrane. The gamma chain is believed to be important in regulating ATPase activity and the flow of protons through the CF(0) complex. The sequence is that of ATP synthase gamma chain from Mycolicibacterium vanbaalenii (strain DSM 7251 / JCM 13017 / BCRC 16820 / KCTC 9966 / NRRL B-24157 / PYR-1) (Mycobacterium vanbaalenii).